The sequence spans 332 residues: MQPETQSSALPAYRFSIAPMLDWTDRHCRYFLRLLSRQTQLYTEMVTTGAIIHGKGDYLAYSEEEHPVALQLGGSDPAQLAHCAKLAEARGYDEINLNVGCPSDRVQNGMFGACLMGNAQLVADCVKAMRDVVSIPVTVKTRIGIDDQDSYAFLCDFIDTVSGQGECEMFIIHARKAWLSGLSPKENREIPPLDYPRVYQLKRDFPHLTMSINGGIKSLEEAKEHLRHMDGVMVGREAYQNPGILAAVDREIFGADTTDADPVAVVRAMYPYIERELSQGAYLGHITRHMLGLFQGIPGARQWRRYLSENAHKAGADVAVLEQALKLVADKR.

FMN is bound by residues 19–21 (PML) and Gln71. Cys101 functions as the Proton donor in the catalytic mechanism. Residues Lys140, His173, 213–215 (NGG), and 235–236 (GR) each bind FMN.

This sequence belongs to the Dus family. DusA subfamily. The cofactor is FMN.

It carries out the reaction 5,6-dihydrouridine(20) in tRNA + NADP(+) = uridine(20) in tRNA + NADPH + H(+). The enzyme catalyses 5,6-dihydrouridine(20) in tRNA + NAD(+) = uridine(20) in tRNA + NADH + H(+). It catalyses the reaction 5,6-dihydrouridine(20a) in tRNA + NADP(+) = uridine(20a) in tRNA + NADPH + H(+). The catalysed reaction is 5,6-dihydrouridine(20a) in tRNA + NAD(+) = uridine(20a) in tRNA + NADH + H(+). Its function is as follows. Catalyzes the synthesis of 5,6-dihydrouridine (D), a modified base found in the D-loop of most tRNAs, via the reduction of the C5-C6 double bond in target uridines. Specifically modifies U20 and U20a in tRNAs. The protein is tRNA-dihydrouridine(20/20a) synthase of Salmonella typhimurium (strain LT2 / SGSC1412 / ATCC 700720).